The following is a 297-amino-acid chain: Protease HtpX homolog (297 aa).

A helical membrane pass occupies residues 16-36; sequence IFMAIGFLVGGMAGMILAFVV. H134 is a binding site for Zn(2+). E135 is an active-site residue. H138 is a binding site for Zn(2+). Transmembrane regions (helical) follow at residues 147–167 and 175–195; these read MTVTATLAGAIGMLANFALFF and IGSIAIMIFAPMAAALVQMAI. Residue E200 coordinates Zn(2+).

Belongs to the peptidase M48B family. It depends on Zn(2+) as a cofactor.

Its subcellular location is the cell inner membrane. In Hyphomonas neptunium (strain ATCC 15444), this protein is Protease HtpX homolog.